Consider the following 504-residue polypeptide: uncharacterized protein (504 aa).

Positions 1 to 212 (MFMKSKAAGS…LYKTQDPVLD (212 aa)) are excised as a propeptide.

This is an uncharacterized protein from Deinococcus radiodurans (strain ATCC 13939 / DSM 20539 / JCM 16871 / CCUG 27074 / LMG 4051 / NBRC 15346 / NCIMB 9279 / VKM B-1422 / R1).